Consider the following 123-residue polypeptide: Ribosome-binding factor A (123 aa).

This sequence belongs to the RbfA family. Monomer. Binds 30S ribosomal subunits, but not 50S ribosomal subunits or 70S ribosomes.

It is found in the cytoplasm. Functionally, one of several proteins that assist in the late maturation steps of the functional core of the 30S ribosomal subunit. Associates with free 30S ribosomal subunits (but not with 30S subunits that are part of 70S ribosomes or polysomes). Required for efficient processing of 16S rRNA. May interact with the 5'-terminal helix region of 16S rRNA. In Ralstonia pickettii (strain 12J), this protein is Ribosome-binding factor A.